Here is a 387-residue protein sequence, read N- to C-terminus: S-adenosylmethionine synthase (387 aa).

An ATP-binding site is contributed by His-16. Mg(2+) is bound at residue Asp-18. Glu-44 is a K(+) binding site. Residues Glu-57 and Gln-100 each coordinate L-methionine. The flexible loop stretch occupies residues 100–110; it reads QSPDIAQGVDR. Residues 167-169, 232-233, Asp-241, 247-248, Ala-264, and Lys-268 contribute to the ATP site; these read DAK, RF, and RK. Asp-241 contributes to the L-methionine binding site. An L-methionine-binding site is contributed by Lys-272.

It belongs to the AdoMet synthase family. Homotetramer; dimer of dimers. The cofactor is Mg(2+). K(+) serves as cofactor.

The protein localises to the cytoplasm. The catalysed reaction is L-methionine + ATP + H2O = S-adenosyl-L-methionine + phosphate + diphosphate. The protein operates within amino-acid biosynthesis; S-adenosyl-L-methionine biosynthesis; S-adenosyl-L-methionine from L-methionine: step 1/1. Functionally, catalyzes the formation of S-adenosylmethionine (AdoMet) from methionine and ATP. The overall synthetic reaction is composed of two sequential steps, AdoMet formation and the subsequent tripolyphosphate hydrolysis which occurs prior to release of AdoMet from the enzyme. In Cupriavidus necator (strain ATCC 17699 / DSM 428 / KCTC 22496 / NCIMB 10442 / H16 / Stanier 337) (Ralstonia eutropha), this protein is S-adenosylmethionine synthase.